The sequence spans 431 residues: Argininosuccinate lyase (431 aa).

Belongs to the lyase 1 family. Argininosuccinate lyase subfamily.

The protein resides in the cytoplasm. It catalyses the reaction 2-(N(omega)-L-arginino)succinate = fumarate + L-arginine. The protein operates within amino-acid biosynthesis; L-arginine biosynthesis; L-arginine from L-ornithine and carbamoyl phosphate: step 3/3. The sequence is that of Argininosuccinate lyase from Xanthomonas oryzae pv. oryzae (strain MAFF 311018).